The chain runs to 140 residues: 3-hydroxyacyl-[acyl-carrier-protein] dehydratase FabZ (140 aa).

H47 is an active-site residue.

Belongs to the thioester dehydratase family. FabZ subfamily.

The protein resides in the cytoplasm. It carries out the reaction a (3R)-hydroxyacyl-[ACP] = a (2E)-enoyl-[ACP] + H2O. In terms of biological role, involved in unsaturated fatty acids biosynthesis. Catalyzes the dehydration of short chain beta-hydroxyacyl-ACPs and long chain saturated and unsaturated beta-hydroxyacyl-ACPs. This Streptococcus sanguinis (strain SK36) protein is 3-hydroxyacyl-[acyl-carrier-protein] dehydratase FabZ.